Reading from the N-terminus, the 354-residue chain is RH-like protein (354 aa).

The next 8 helical transmembrane spans lie at 11–31 (GCLP…FFFF), 45–65 (VATY…LGFL), 77–97 (VAFN…LDGF), 125–145 (ISVG…MVLV), 167–187 (VNIM…AWCL), 209–229 (AMLG…ALLT), 238–258 (VFNT…VSSL), and 287–307 (LISS…ISIG).

The protein belongs to the ammonium transporter (TC 2.A.49) family. Rh subfamily.

Its subcellular location is the membrane. May be part of an oligomeric complex which is likely to have a transport or channel function in the erythrocyte membrane. The sequence is that of RH-like protein from Hylobates pileatus (Pileated gibbon).